Here is a 471-residue protein sequence, read N- to C-terminus: Bifunctional protein GlmU (471 aa).

The segment at 1-235 (MVAVAILAAG…YQEIFGINNR (235 aa)) is pyrophosphorylase. Residues 7-10 (LAAG), lysine 21, glutamine 82, and 87-88 (GT) each bind UDP-N-acetyl-alpha-D-glucosamine. Aspartate 112 contacts Mg(2+). Residues glycine 149, glutamate 164, asparagine 179, and asparagine 233 each coordinate UDP-N-acetyl-alpha-D-glucosamine. Asparagine 233 is a Mg(2+) binding site. Residues 236–256 (KHLAKAHEILQVRVKDDWMEA) form a linker region. Positions 257 to 471 (GVTLIDPDSI…SKKEENKSSP (215 aa)) are N-acetyltransferase. Arginine 338 and lysine 356 together coordinate UDP-N-acetyl-alpha-D-glucosamine. The active-site Proton acceptor is histidine 368. UDP-N-acetyl-alpha-D-glucosamine contacts are provided by tyrosine 371 and asparagine 382. Acetyl-CoA-binding positions include alanine 385, 391–392 (NY), serine 410, alanine 428, and arginine 445.

This sequence in the N-terminal section; belongs to the N-acetylglucosamine-1-phosphate uridyltransferase family. The protein in the C-terminal section; belongs to the transferase hexapeptide repeat family. Homotrimer. It depends on Mg(2+) as a cofactor.

It is found in the cytoplasm. The enzyme catalyses alpha-D-glucosamine 1-phosphate + acetyl-CoA = N-acetyl-alpha-D-glucosamine 1-phosphate + CoA + H(+). It catalyses the reaction N-acetyl-alpha-D-glucosamine 1-phosphate + UTP + H(+) = UDP-N-acetyl-alpha-D-glucosamine + diphosphate. It participates in nucleotide-sugar biosynthesis; UDP-N-acetyl-alpha-D-glucosamine biosynthesis; N-acetyl-alpha-D-glucosamine 1-phosphate from alpha-D-glucosamine 6-phosphate (route II): step 2/2. The protein operates within nucleotide-sugar biosynthesis; UDP-N-acetyl-alpha-D-glucosamine biosynthesis; UDP-N-acetyl-alpha-D-glucosamine from N-acetyl-alpha-D-glucosamine 1-phosphate: step 1/1. Its pathway is bacterial outer membrane biogenesis; LPS lipid A biosynthesis. Functionally, catalyzes the last two sequential reactions in the de novo biosynthetic pathway for UDP-N-acetylglucosamine (UDP-GlcNAc). The C-terminal domain catalyzes the transfer of acetyl group from acetyl coenzyme A to glucosamine-1-phosphate (GlcN-1-P) to produce N-acetylglucosamine-1-phosphate (GlcNAc-1-P), which is converted into UDP-GlcNAc by the transfer of uridine 5-monophosphate (from uridine 5-triphosphate), a reaction catalyzed by the N-terminal domain. This chain is Bifunctional protein GlmU, found in Trichodesmium erythraeum (strain IMS101).